A 575-amino-acid polypeptide reads, in one-letter code: Septation ring formation regulator EzrA (575 aa).

The Extracellular portion of the chain corresponds to 1 to 8 (MSNGQLIY). A helical membrane pass occupies residues 9–27 (LMVAIAVILVLAYVVAIFL). Residues 28 to 575 (RKRNEGRLEA…YEKTRETIRF (548 aa)) are Cytoplasmic-facing. Coiled-coil stretches lie at residues 105 to 191 (LKAS…FVTL), 265 to 301 (LYEAFKKNQENIRQLELDNAEYENGQAQEEINALYDI), 354 to 416 (VRRI…IEKD), and 456 to 526 (TASN…IQEA).

Belongs to the EzrA family.

The protein resides in the cell membrane. Its function is as follows. Negative regulator of FtsZ ring formation; modulates the frequency and position of FtsZ ring formation. Inhibits FtsZ ring formation at polar sites. Interacts either with FtsZ or with one of its binding partners to promote depolymerization. The polypeptide is Septation ring formation regulator EzrA (Streptococcus pneumoniae (strain ATCC BAA-255 / R6)).